We begin with the raw amino-acid sequence, 142 residues long: Large ribosomal subunit protein uL13 (142 aa).

This sequence belongs to the universal ribosomal protein uL13 family. In terms of assembly, part of the 50S ribosomal subunit.

In terms of biological role, this protein is one of the early assembly proteins of the 50S ribosomal subunit, although it is not seen to bind rRNA by itself. It is important during the early stages of 50S assembly. This is Large ribosomal subunit protein uL13 from Shigella dysenteriae serotype 1 (strain Sd197).